The sequence spans 334 residues: Heat-inducible transcription repressor HrcA (334 aa).

This sequence belongs to the HrcA family.

Functionally, negative regulator of class I heat shock genes (grpE-dnaK-dnaJ and groELS operons). Prevents heat-shock induction of these operons. This chain is Heat-inducible transcription repressor HrcA, found in Verminephrobacter eiseniae (strain EF01-2).